A 522-amino-acid chain; its full sequence is Poly(A) polymerase (522 aa).

Residues 63-65 (YGS), 76-78 (DID), Asp130, Lys193, Tyr202, and 211-212 (GI) contribute to the ATP site. Positions 76, 78, and 130 each coordinate Mg(2+). The tract at residues 475–522 (QLKAKEENSIPNEEKKEQLKKEMKQEANTIVKNSSTDDDFMKRFTRKN) is disordered. A compositionally biased stretch (basic and acidic residues) spans 476-499 (LKAKEENSIPNEEKKEQLKKEMKQ).

It belongs to the poly(A) polymerase family. It depends on Mg(2+) as a cofactor. Requires Mn(2+) as cofactor.

The protein localises to the cytoplasm. It localises to the nucleus. The catalysed reaction is RNA(n) + ATP = RNA(n)-3'-adenine ribonucleotide + diphosphate. Functionally, polymerase that creates the 3'-poly(A) tail of mRNA's. May acquire specificity through interaction with a cleavage and polyadenylation factor. This Entamoeba histolytica (strain ATCC 30459 / HM-1:IMSS / ABRM) protein is Poly(A) polymerase.